Reading from the N-terminus, the 150-residue chain is UPF0178 protein Bcep1808_1605 (150 aa).

Belongs to the UPF0178 family.

This chain is UPF0178 protein Bcep1808_1605, found in Burkholderia vietnamiensis (strain G4 / LMG 22486) (Burkholderia cepacia (strain R1808)).